Consider the following 590-residue polypeptide: Neuronal PAS domain-containing protein 1 (590 aa).

Residues 45–98 (QRKEKSRNAARSRRGKENLEFFELAKLLPLPGAISSQLDKASIVRLSVTYLRLR) enclose the bHLH domain. One can recognise a PAS 1 domain in the interval 135–207 (EQHLGGHILQ…LGLRTPTPGP (73 aa)). Residues 198 to 229 (LGLRTPTPGPPTPPSVSSSSSSSSSLADTPEI) form a disordered region. The segment covering 212–222 (SVSSSSSSSSS) has biased composition (low complexity). The PAS 2 domain occupies 293-359 (APLAELPLHG…IRQSHVDLLD (67 aa)). Positions 365-408 (TGYYRWLQRAGGFVWLQSVATVAGSGKSPGEHHVLWVSHVLSQA) constitute a PAC domain. A disordered region spans residues 425–494 (ACEEASSPGP…SHPATPRPEF (70 aa)). A compositionally biased stretch (pro residues) spans 433-442 (GPEPTEPEPP). The span at 463-476 (IKVEPGPRETKGSE) shows a compositional bias: basic and acidic residues.

Efficient DNA binding requires dimerization with another bHLH protein. Interacts with ARNT; forms a heterodimer that binds core DNA sequence 5'-[AG]CGTG-3' within the hypoxia response element (HRE) leading to a transcriptional repressor on its target gene TH.

It is found in the nucleus. In terms of biological role, may control regulatory pathways relevant to schizophrenia and to psychotic illness. May play a role in late central nervous system development by modulating EPO expression in response to cellular oxygen level. Forms a heterodimer that binds core DNA sequence 5'-TACGTG-3' within the hypoxia response element (HRE) leading to transcriptional repression on its target gene TH. The chain is Neuronal PAS domain-containing protein 1 (NPAS1) from Homo sapiens (Human).